The following is a 285-amino-acid chain: Diaminopimelate epimerase (285 aa).

Residues asparagine 15 and asparagine 68 each coordinate substrate. Cysteine 77 (proton donor) is an active-site residue. Substrate-binding positions include 78–79 (GN), asparagine 165, asparagine 201, and 219–220 (ER). Residue cysteine 228 is the Proton acceptor of the active site. 229 to 230 (GT) provides a ligand contact to substrate.

The protein belongs to the diaminopimelate epimerase family. In terms of assembly, homodimer.

It is found in the cytoplasm. It carries out the reaction (2S,6S)-2,6-diaminopimelate = meso-2,6-diaminopimelate. The protein operates within amino-acid biosynthesis; L-lysine biosynthesis via DAP pathway; DL-2,6-diaminopimelate from LL-2,6-diaminopimelate: step 1/1. Catalyzes the stereoinversion of LL-2,6-diaminopimelate (L,L-DAP) to meso-diaminopimelate (meso-DAP), a precursor of L-lysine and an essential component of the bacterial peptidoglycan. This is Diaminopimelate epimerase from Synechococcus sp. (strain JA-2-3B'a(2-13)) (Cyanobacteria bacterium Yellowstone B-Prime).